The chain runs to 68 residues: Neuronal regeneration-related protein (68 aa).

The tract at residues 42-68 is disordered; it reads EETGAASLTPPGSREFTSPATSYLHPF.

In terms of assembly, interacts with FLNA. Interacts with the latency-associated peptides (LAP) of TGFB1 and TGFB2; the interaction results in a decrease in TGFB autoinduction. Post-translationally, phosphorylated on Ser-59. Phosphorylation decreases stability and activity. As to expression, expressed in brain and fetal lung.

It is found in the cytoplasm. May have roles in cellular differentiation. Ectopic expression induces differentiation of fibroblast into myofibroblast and myofibroblast ameboid migration. Increases retinoic-acid regulation of lipid-droplet biogenesis. May also have neural functions. Promotes axonal regeneration and augments motility of gliomas. Down-regulates the expression of TGFB1 and TGFB2 but not of TGFB3. May play a role in the regulation of alveolar generation. This Mus musculus (Mouse) protein is Neuronal regeneration-related protein (Nrep).